Here is a 296-residue protein sequence, read N- to C-terminus: Protoheme IX farnesyltransferase (296 aa).

9 consecutive transmembrane segments (helical) span residues Val-8–Ala-28, Tyr-35–Phe-55, Val-84–Ala-104, Leu-107–Met-127, Val-132–Ala-152, Leu-162–Phe-182, Ile-208–Ala-228, Gly-229–Arg-249, and Leu-263–Ser-283.

It belongs to the UbiA prenyltransferase family. Protoheme IX farnesyltransferase subfamily.

The protein resides in the cell inner membrane. It carries out the reaction heme b + (2E,6E)-farnesyl diphosphate + H2O = Fe(II)-heme o + diphosphate. The protein operates within porphyrin-containing compound metabolism; heme O biosynthesis; heme O from protoheme: step 1/1. Converts heme B (protoheme IX) to heme O by substitution of the vinyl group on carbon 2 of heme B porphyrin ring with a hydroxyethyl farnesyl side group. This is Protoheme IX farnesyltransferase from Serratia proteamaculans (strain 568).